A 229-amino-acid chain; its full sequence is Cytochrome c oxidase subunit 2 (229 aa).

Residues 1–14 (MPTPNQTNFQDAAS) lie on the Mitochondrial intermembrane side of the membrane. The chain crosses the membrane as a helical span at residues 15 to 45 (PLMEELTHFHDHTLMIVFMISLLVLYILLSM). The Mitochondrial matrix segment spans residues 46–59 (LSTKLTHTNTANAQ). The helical transmembrane segment at 60–87 (QAEMVWTILPAIILITIALPSLQILYMM) threads the bilayer. The Mitochondrial intermembrane segment spans residues 88–229 (DEINKPHMTI…DLWLAMIDTL (142 aa)). 6 residues coordinate Cu cation: H161, C196, E198, C200, H204, and M207. E198 is a Mg(2+) binding site.

Belongs to the cytochrome c oxidase subunit 2 family. As to quaternary structure, component of the cytochrome c oxidase (complex IV, CIV), a multisubunit enzyme composed of 14 subunits. The complex is composed of a catalytic core of 3 subunits MT-CO1, MT-CO2 and MT-CO3, encoded in the mitochondrial DNA, and 11 supernumerary subunits COX4I, COX5A, COX5B, COX6A, COX6B, COX6C, COX7A, COX7B, COX7C, COX8 and NDUFA4, which are encoded in the nuclear genome. The complex exists as a monomer or a dimer and forms supercomplexes (SCs) in the inner mitochondrial membrane with NADH-ubiquinone oxidoreductase (complex I, CI) and ubiquinol-cytochrome c oxidoreductase (cytochrome b-c1 complex, complex III, CIII), resulting in different assemblies (supercomplex SCI(1)III(2)IV(1) and megacomplex MCI(2)III(2)IV(2)). Found in a complex with TMEM177, COA6, COX18, COX20, SCO1 and SCO2. Interacts with TMEM177 in a COX20-dependent manner. Interacts with COX20. Interacts with COX16. Cu cation serves as cofactor.

It localises to the mitochondrion inner membrane. The catalysed reaction is 4 Fe(II)-[cytochrome c] + O2 + 8 H(+)(in) = 4 Fe(III)-[cytochrome c] + 2 H2O + 4 H(+)(out). In terms of biological role, component of the cytochrome c oxidase, the last enzyme in the mitochondrial electron transport chain which drives oxidative phosphorylation. The respiratory chain contains 3 multisubunit complexes succinate dehydrogenase (complex II, CII), ubiquinol-cytochrome c oxidoreductase (cytochrome b-c1 complex, complex III, CIII) and cytochrome c oxidase (complex IV, CIV), that cooperate to transfer electrons derived from NADH and succinate to molecular oxygen, creating an electrochemical gradient over the inner membrane that drives transmembrane transport and the ATP synthase. Cytochrome c oxidase is the component of the respiratory chain that catalyzes the reduction of oxygen to water. Electrons originating from reduced cytochrome c in the intermembrane space (IMS) are transferred via the dinuclear copper A center (CU(A)) of subunit 2 and heme A of subunit 1 to the active site in subunit 1, a binuclear center (BNC) formed by heme A3 and copper B (CU(B)). The BNC reduces molecular oxygen to 2 water molecules using 4 electrons from cytochrome c in the IMS and 4 protons from the mitochondrial matrix. The polypeptide is Cytochrome c oxidase subunit 2 (MT-CO2) (Pelomedusa subrufa (African side-necked turtle)).